Reading from the N-terminus, the 946-residue chain is Multiple C2 and transmembrane domain-containing protein 1 (946 aa).

2 disordered regions span residues Q28–S193 and L205–E229. A compositionally biased stretch (gly residues) spans V31–G43. Over residues F87–C96 the composition is skewed to polar residues. Positions P143–S163 are enriched in low complexity. Basic and acidic residues predominate over residues R169–L187. 3 C2 domains span residues K235–L353, Q399–L516, and H550–L671. Positions 270, 276, 323, 325, 331, 433, 439, 486, 488, 494, 589, 595, 641, 643, and 649 each coordinate Ca(2+). Transmembrane regions (helical) follow at residues F758 to L778 and P861 to I881.

It belongs to the MCTP family. It depends on Ca(2+) as a cofactor. Expressed in the brain and central nervous system (at protein level). Isoform 1 and isoform 2 are expressed in the brain, kidney, liver, heart, lung, skeletal muscle, testis and spleen. Isoform 2 shows a higher expression in the brain, heart and skeletal muscle.

Its subcellular location is the cytoplasmic vesicle. The protein resides in the secretory vesicle. It is found in the synaptic vesicle membrane. The protein localises to the recycling endosome. It localises to the endoplasmic reticulum membrane. Its function is as follows. Calcium sensor which is essential for the stabilization of normal baseline neurotransmitter release and for the induction and long-term maintenance of presynaptic homeostatic plasticity. Overexpression in cultured neurons significantly inhibits neuronal transferrin endocytosis, secretory vesicle retrieval, cell migration, and oxidative stress from glutamate toxicity. The protein is Multiple C2 and transmembrane domain-containing protein 1 of Rattus norvegicus (Rat).